An 806-amino-acid polypeptide reads, in one-letter code: Sucrose synthase (806 aa).

The GT-B glycosyltransferase stretch occupies residues 275 to 752 (MVFNVVILSP…GLQRIEEKYT (478 aa)).

It belongs to the glycosyltransferase 1 family. Plant sucrose synthase subfamily.

The catalysed reaction is an NDP-alpha-D-glucose + D-fructose = a ribonucleoside 5'-diphosphate + sucrose + H(+). Functionally, sucrose-cleaving enzyme that provides UDP-glucose and fructose for various metabolic pathways. This is Sucrose synthase (SUCS) from Vicia faba (Broad bean).